A 234-amino-acid chain; its full sequence is Sugar fermentation stimulation protein A (234 aa).

The segment at residues 201–220 is a DNA-binding region (H-T-H motif); the sequence is LLSEAQQRGVEILAYKAELS.

It belongs to the SfsA family.

Its function is as follows. Binds to DNA non-specifically. Could be a regulatory factor involved in maltose metabolism. This chain is Sugar fermentation stimulation protein A, found in Escherichia coli (strain SMS-3-5 / SECEC).